Consider the following 175-residue polypeptide: Disulfide bond formation protein B (175 aa).

The Cytoplasmic segment spans residues 1 to 13 (MSKLVTFSQQRSA). The helical transmembrane segment at 14-30 (WLILMFSALGLEASALY) threads the bilayer. Residues 31-48 (FQYVMLLDPCVMCIYIRV) lie on the Periplasmic side of the membrane. Cysteines 40 and 43 form a disulfide. The helical transmembrane segment at 49–64 (AVLGLILAGLVGSIAP) threads the bilayer. Over 65 to 71 (RFWIVRF) the chain is Cytoplasmic. A helical transmembrane segment spans residues 72 to 89 (LGMSLWGVSSAWGAKLSF). Over 90–144 (ELYQMQANPSPFSTCSFYPEFPTWMPLDAWMPSIFMPTGMCSDIPWTMMSLSMTQ) the chain is Periplasmic. The cysteines at positions 104 and 130 are disulfide-linked. The chain crosses the membrane as a helical span at residues 145–163 (WTLIAFVGYSIAFLLFIYP). The Cytoplasmic portion of the chain corresponds to 164–175 (GLLYKKPTNPYS).

Belongs to the DsbB family.

It localises to the cell inner membrane. In terms of biological role, required for disulfide bond formation in some periplasmic proteins. Acts by oxidizing the DsbA protein. This is Disulfide bond formation protein B from Shewanella denitrificans (strain OS217 / ATCC BAA-1090 / DSM 15013).